A 215-amino-acid chain; its full sequence is A-type ATP synthase subunit E (215 aa).

This sequence belongs to the V-ATPase E subunit family. As to quaternary structure, has multiple subunits with at least A(3), B(3), C, D, E, F, H, I and proteolipid K(x).

It localises to the cell membrane. Its function is as follows. Component of the A-type ATP synthase that produces ATP from ADP in the presence of a proton gradient across the membrane. In Thermofilum pendens (strain DSM 2475 / Hrk 5), this protein is A-type ATP synthase subunit E.